Here is a 380-residue protein sequence, read N- to C-terminus: Aminomethyltransferase (380 aa).

The protein belongs to the GcvT family. In terms of assembly, the glycine cleavage system is composed of four proteins: P, T, L and H.

The enzyme catalyses N(6)-[(R)-S(8)-aminomethyldihydrolipoyl]-L-lysyl-[protein] + (6S)-5,6,7,8-tetrahydrofolate = N(6)-[(R)-dihydrolipoyl]-L-lysyl-[protein] + (6R)-5,10-methylene-5,6,7,8-tetrahydrofolate + NH4(+). Functionally, the glycine cleavage system catalyzes the degradation of glycine. This chain is Aminomethyltransferase, found in Koribacter versatilis (strain Ellin345).